The primary structure comprises 209 residues: Ephrin-A2 (209 aa).

The signal sequence occupies residues 1–20 (MAPAQRPLLPLLLLLLPLRA). The Ephrin RBD domain occupies 30 to 170 (ADRYAVYWNR…RLKVYVRPTN (141 aa)). Residue N38 is glycosylated (N-linked (GlcNAc...) asparagine). Disulfide bonds link C69–C110 and C98–C159. N-linked (GlcNAc...) asparagine glycans are attached at residues N170 and N184. N184 is lipidated: GPI-anchor amidated asparagine. Residues 185–209 (SSCSGLGGCHLFLTTVPVLWSLLGS) constitute a propeptide, removed in mature form.

Belongs to the ephrin family. Binds to the receptor tyrosine kinases EPHA3, EPHA4 and EPHA5. Interacts with EPHA8; activates EPHA8. Expressed in myogenic progenitor cells.

The protein localises to the cell membrane. Its function is as follows. Cell surface GPI-bound ligand for Eph receptors, a family of receptor tyrosine kinases which are crucial for migration, repulsion and adhesion during neuronal, vascular and epithelial development. Binds promiscuously Eph receptors residing on adjacent cells, leading to contact-dependent bidirectional signaling into neighboring cells. The signaling pathway downstream of the receptor is referred to as forward signaling while the signaling pathway downstream of the ephrin ligand is referred to as reverse signaling. With the EPHA2 receptor may play a role in bone remodeling through regulation of osteoclastogenesis and osteoblastogenesis. The polypeptide is Ephrin-A2 (Efna2) (Mus musculus (Mouse)).